A 357-amino-acid chain; its full sequence is Cobalt-precorrin-5B C(1)-methyltransferase (357 aa).

The protein belongs to the CbiD family.

The catalysed reaction is Co-precorrin-5B + S-adenosyl-L-methionine = Co-precorrin-6A + S-adenosyl-L-homocysteine. Its pathway is cofactor biosynthesis; adenosylcobalamin biosynthesis; cob(II)yrinate a,c-diamide from sirohydrochlorin (anaerobic route): step 6/10. Its function is as follows. Catalyzes the methylation of C-1 in cobalt-precorrin-5B to form cobalt-precorrin-6A. In Rhodospirillum rubrum (strain ATCC 11170 / ATH 1.1.1 / DSM 467 / LMG 4362 / NCIMB 8255 / S1), this protein is Cobalt-precorrin-5B C(1)-methyltransferase.